A 111-amino-acid chain; its full sequence is Large ribosomal subunit protein uL23 (111 aa).

This sequence belongs to the universal ribosomal protein uL23 family. As to quaternary structure, part of the 50S ribosomal subunit. Contacts protein L29, and trigger factor when it is bound to the ribosome.

Functionally, one of the early assembly proteins it binds 23S rRNA. One of the proteins that surrounds the polypeptide exit tunnel on the outside of the ribosome. Forms the main docking site for trigger factor binding to the ribosome. The protein is Large ribosomal subunit protein uL23 of Chlamydia abortus (strain DSM 27085 / S26/3) (Chlamydophila abortus).